Reading from the N-terminus, the 334-residue chain is N-acetylmuramoyl-L-alanine amidase sle1 (334 aa).

Positions 1-25 (MQKKVIAAIIGTSAISAVAATQANA) are cleaved as a signal peptide. Positions 27 to 70 (TTHTVKPGESVWAISNKYGISIAKLKSLNNLTSNLIFPNQVLKV) constitute a LysM 1 domain. A compositionally biased stretch (low complexity) spans 71-86 (SGSSNSTSNSSRPSTN). Residues 71 to 90 (SGSSNSTSNSSRPSTNSGGG) form a disordered region. LysM domains follow at residues 91–134 (SYYT…KLKV) and 158–201 (SYYT…KLKV). The 125-residue stretch at 210–334 (GSATTTNRGY…YQVNNYRYIH (125 aa)) folds into the Peptidase C51 domain.

Its subcellular location is the secreted. It is found in the cell surface. It catalyses the reaction Hydrolyzes the link between N-acetylmuramoyl residues and L-amino acid residues in certain cell-wall glycopeptides.. Its function is as follows. Peptidoglycan hydrolase involved in the splitting of the septum during cell division. This is N-acetylmuramoyl-L-alanine amidase sle1 (sle1) from Staphylococcus aureus (strain USA300).